A 216-amino-acid chain; its full sequence is Sperm microtubule inner protein 8 (216 aa).

Microtubule inner protein component of sperm flagellar doublet microtubules. As to expression, expressed in testis.

It is found in the cytoplasm. Its subcellular location is the cytoskeleton. The protein resides in the flagellum axoneme. In terms of biological role, microtubule inner protein (MIP) part of the dynein-decorated doublet microtubules (DMTs) in flagellum axoneme. May serve to reinforce and thus stabilize the microtubule structure in the sperm flagella. The sequence is that of Sperm microtubule inner protein 8 (Spmip8) from Mus musculus (Mouse).